We begin with the raw amino-acid sequence, 188 residues long: MSDIIDDFQKDVTINMQKCIDNFKININKIHVGRISPDILSFIKIEYYGVITPLCQLTNTVVEQPRTLIITVFDSSMIKFIEKAILESNLGCTPVSTGNTIRVTFPTLTESRRYSLIKMVRSESEKSKVLIRNIRRVSNDKLKTFLRNKEINKDNEHYFQNEIQNLTDIWIKKIILITKEKELELMKF.

It belongs to the RRF family.

It localises to the cytoplasm. Responsible for the release of ribosomes from messenger RNA at the termination of protein biosynthesis. May increase the efficiency of translation by recycling ribosomes from one round of translation to another. This is Ribosome-recycling factor from Blochmanniella floridana.